We begin with the raw amino-acid sequence, 305 residues long: UPF0282 protein Tneu_0934 (305 aa).

It belongs to the UPF0282 family.

The sequence is that of UPF0282 protein Tneu_0934 from Pyrobaculum neutrophilum (strain DSM 2338 / JCM 9278 / NBRC 100436 / V24Sta) (Thermoproteus neutrophilus).